Consider the following 890-residue polypeptide: Agglutinin-like protein ARB_02240 (890 aa).

A signal peptide spans 1–20 (MRLTTSVLLWAATSVLQADA). Residues Asn106, Asn217, Asn583, and Asn654 are each glycosylated (N-linked (GlcNAc...) asparagine). Positions 680–872 (IPSGPTTRPE…GGAGSLSPST (193 aa)) are disordered. Low complexity-rich tracts occupy residues 693–753 (TSST…TDSS) and 760–790 (TTST…HSST). Polar residues predominate over residues 791–802 (GSDPESTNTRHP). Low complexity-rich tracts occupy residues 803–812 (SSTASGSTTT) and 821–837 (SSSS…TATT). The segment covering 838–848 (TGGGSIPGSGT) has biased composition (gly residues). Gly864 carries the GPI-anchor amidated glycine lipid modification. The propeptide at 865 to 890 (AGSLSPSTWGKVVTCISSMALLVAFI) is removed in mature form.

Belongs to the ALS family. The GPI-anchor is attached to the protein in the endoplasmic reticulum and serves to target the protein to the cell surface. There, the glucosamine-inositol phospholipid moiety is cleaved off and the GPI-modified mannoprotein is covalently attached via its lipidless GPI glycan remnant to the 1,6-beta-glucan of the outer cell wall layer.

Its subcellular location is the secreted. It localises to the cell membrane. It is found in the cell wall. In terms of biological role, cell surface adhesion protein which mediates cell agglutination and host tissue adherence. The chain is Agglutinin-like protein ARB_02240 from Arthroderma benhamiae (strain ATCC MYA-4681 / CBS 112371) (Trichophyton mentagrophytes).